A 279-amino-acid chain; its full sequence is DegV domain-containing protein spr1019 (279 aa).

The DegV domain occupies 4–277 (IKIVTDSSVT…ENAWAILIRY (274 aa)). Positions 62 and 94 each coordinate hexadecanoate.

In terms of biological role, may bind long-chain fatty acids, such as palmitate, and may play a role in lipid transport or fatty acid metabolism. This Streptococcus pneumoniae (strain ATCC BAA-255 / R6) protein is DegV domain-containing protein spr1019.